A 131-amino-acid chain; its full sequence is Large ribosomal subunit protein bL17 (131 aa).

This sequence belongs to the bacterial ribosomal protein bL17 family. In terms of assembly, part of the 50S ribosomal subunit. Contacts protein L32.

The polypeptide is Large ribosomal subunit protein bL17 (Bordetella petrii (strain ATCC BAA-461 / DSM 12804 / CCUG 43448)).